The sequence spans 152 residues: Deoxyuridine 5'-triphosphate nucleotidohydrolase (152 aa).

Residues 71-73 (RSG), N84, 88-90 (LID), and M98 contribute to the substrate site.

It belongs to the dUTPase family. Mg(2+) serves as cofactor.

The catalysed reaction is dUTP + H2O = dUMP + diphosphate + H(+). Its pathway is pyrimidine metabolism; dUMP biosynthesis; dUMP from dCTP (dUTP route): step 2/2. This enzyme is involved in nucleotide metabolism: it produces dUMP, the immediate precursor of thymidine nucleotides and it decreases the intracellular concentration of dUTP so that uracil cannot be incorporated into DNA. This chain is Deoxyuridine 5'-triphosphate nucleotidohydrolase, found in Shewanella loihica (strain ATCC BAA-1088 / PV-4).